The following is a 314-amino-acid chain: Ketimine reductase mu-crystallin (314 aa).

Residue Arg47 coordinates 3,3',5-triiodo-L-thyronine. NADPH is bound by residues Ser91, His92, Arg119, Ala144, Val146, Gln147, Asn168, Arg169, Thr170, Asn173, Thr205, and Met206. 3,3',5-triiodo-L-thyronine is bound at residue Glu257. Ser292 contributes to the NADPH binding site.

Belongs to the ornithine cyclodeaminase/mu-crystallin family. In terms of assembly, homodimer. Binds the thyroid hormone triiodothyronine (T3); T3 binding inhibits enzymatic activity.

It is found in the cytoplasm. It carries out the reaction L-pipecolate + NAD(+) = Delta(1)-piperideine-2-carboxylate + NADH + H(+). It catalyses the reaction L-pipecolate + NADP(+) = Delta(1)-piperideine-2-carboxylate + NADPH + H(+). The enzyme catalyses L-proline + NADP(+) = 1-pyrroline-2-carboxylate + NADPH + H(+). The catalysed reaction is L-proline + NAD(+) = 1-pyrroline-2-carboxylate + NADH + H(+). It carries out the reaction (3R)-1,4-thiomorpholine-3-carboxylate + NAD(+) = 3,4-dehydrothiomorpholine-3-carboxylate + NADH + 2 H(+). It catalyses the reaction (3R)-1,4-thiomorpholine-3-carboxylate + NADP(+) = 3,4-dehydrothiomorpholine-3-carboxylate + NADPH + 2 H(+). The enzyme catalyses (S)-cystathionine ketimine + NADH + 2 H(+) = (3R,5S)-2,3,5,6,7-pentahydro-1,4-thiazepine-3,5-dicarboxylate + NAD(+). The catalysed reaction is (S)-cystathionine ketimine + NADPH + 2 H(+) = (3R,5S)-2,3,5,6,7-pentahydro-1,4-thiazepine-3,5-dicarboxylate + NADP(+). It carries out the reaction (R)-lanthionine ketimine + NADPH + 2 H(+) = (3R,5R)-1,4-thiomorpholine-3,5-dicarboxylate + NADP(+). It catalyses the reaction Delta(2)-thiazoline-2-carboxylate + NADPH + 2 H(+) = L-thiazolidine-2-carboxylate + NADP(+). Catalyzes the NAD(P)H-dependent reduction of imine double bonds of a number of cyclic ketimine substrates, including sulfur-containing cyclic ketimines. Under physiological conditions, it efficiently catalyzes delta(1)-piperideine-2-carboxylate (P2C) and delta(1)-pyrroline-2-carboxylate (Pyr2C) reduction, suggesting a central role in lysine and glutamate metabolism. Additional substrates are (S)-cystathionine ketimine (CysK), 3,4-dehydrothiomorpholine-3-carboxylate (AECK), and (R)-lanthionine ketimine (LK) that is reduced at very low rate compared to other substrates. Also catalyzes the NAD(P)H-dependent reduction of delta(2)-thiazoline-2-carboxylate (T2C). The chain is Ketimine reductase mu-crystallin (CRYM) from Bos taurus (Bovine).